A 125-amino-acid polypeptide reads, in one-letter code: UPF0593 mitochondrial protein C806.05 (125 aa).

Belongs to the UPF0593 family.

It is found in the mitochondrion. This chain is UPF0593 mitochondrial protein C806.05, found in Schizosaccharomyces pombe (strain 972 / ATCC 24843) (Fission yeast).